Here is an 81-residue protein sequence, read N- to C-terminus: Photosystem I iron-sulfur center (81 aa).

4Fe-4S ferredoxin-type domains are found at residues 2–31 (SHSVKIYDTCIGCTQCVRACPTDVLEMIPW) and 39–68 (IASAPRTEDCVGCKRCESACPTDFLSVRVS). [4Fe-4S] cluster contacts are provided by Cys-11, Cys-14, Cys-17, Cys-21, Cys-48, Cys-51, Cys-54, and Cys-58.

As to quaternary structure, the eukaryotic PSI reaction center is composed of at least 11 subunits. It depends on [4Fe-4S] cluster as a cofactor.

It localises to the plastid. The protein resides in the chloroplast thylakoid membrane. The enzyme catalyses reduced [plastocyanin] + hnu + oxidized [2Fe-2S]-[ferredoxin] = oxidized [plastocyanin] + reduced [2Fe-2S]-[ferredoxin]. Its function is as follows. Apoprotein for the two 4Fe-4S centers FA and FB of photosystem I (PSI); essential for photochemical activity. FB is the terminal electron acceptor of PSI, donating electrons to ferredoxin. The C-terminus interacts with PsaA/B/D and helps assemble the protein into the PSI complex. Required for binding of PsaD and PsaE to PSI. PSI is a plastocyanin-ferredoxin oxidoreductase, converting photonic excitation into a charge separation, which transfers an electron from the donor P700 chlorophyll pair to the spectroscopically characterized acceptors A0, A1, FX, FA and FB in turn. The chain is Photosystem I iron-sulfur center from Daucus carota (Wild carrot).